The primary structure comprises 687 residues: Auxin response factor 14 (687 aa).

The TF-B3 DNA-binding region spans 133-235 (FCKTLTASDT…QLRLGVRRAV (103 aa)).

This sequence belongs to the ARF family. In terms of assembly, homo and heterodimers. As to expression, expressed in roots, culms, leaves and young panicles.

It localises to the nucleus. Its function is as follows. Auxin response factors (ARFs) are transcriptional factors that bind specifically to the DNA sequence 5'-TGTCTC-3' found in the auxin-responsive promoter elements (AuxREs). The polypeptide is Auxin response factor 14 (ARF14) (Oryza sativa subsp. japonica (Rice)).